The sequence spans 561 residues: Potassium-transporting ATPase potassium-binding subunit (561 aa).

12 helical membrane-spanning segments follow: residues 2 to 22 (GLGLLQIGLTLCIVIAITPVL), 65 to 85 (YIRAILYTNLFMGILVYSLIH), 135 to 155 (ALGFLMFTSAATGLAVGIAFI), 177 to 197 (ILLPISVIGAIALVLLGVPQT), 253 to 273 (FIETIAMIAIPAAMIYTYGVF), 280 to 300 (AWLLFWMVFIVFVILVWVAAT), 327 to 347 (FGWAETALWAVMTTATMCGAV), 353 to 373 (ALMPQGLFATLFNLFLQIIWG), 378 to 398 (GTAYLFIYLILTVFLTGLMVG), 413 to 433 (IVLASLILLVHPIVVLIPSAI), 482 to 502 (LSTSLSILVGRYVPIIAMLLL), and 531 to 551 (AGIVLILGVLTFFPVLALGPI).

Belongs to the KdpA family. As to quaternary structure, the system is composed of three essential subunits: KdpA, KdpB and KdpC.

Its subcellular location is the cell membrane. Functionally, part of the high-affinity ATP-driven potassium transport (or Kdp) system, which catalyzes the hydrolysis of ATP coupled with the electrogenic transport of potassium into the cytoplasm. This subunit binds the extracellular potassium ions and delivers the ions to the membrane domain of KdpB through an intramembrane tunnel. This chain is Potassium-transporting ATPase potassium-binding subunit, found in Anabaena sp. (strain L31).